Here is a 122-residue protein sequence, read N- to C-terminus: Large-conductance mechanosensitive channel (122 aa).

A run of 2 helical transmembrane segments spans residues 29–49 and 66–86; these read FGKI…GLIF and GVFI…FLFI.

The protein belongs to the MscL family. In terms of assembly, homopentamer.

It is found in the cell membrane. Channel that opens in response to stretch forces in the membrane lipid bilayer. May participate in the regulation of osmotic pressure changes within the cell. This is Large-conductance mechanosensitive channel from Macrococcus caseolyticus (strain JCSC5402) (Macrococcoides caseolyticum).